We begin with the raw amino-acid sequence, 126 residues long: Ribulose bisphosphate carboxylase small subunit, chloroplastic 1 (126 aa).

The protein belongs to the RuBisCO small chain family. In terms of assembly, heterohexadecamer of 8 large and 8 small subunits.

It localises to the plastid. The protein resides in the chloroplast. RuBisCO catalyzes two reactions: the carboxylation of D-ribulose 1,5-bisphosphate, the primary event in carbon dioxide fixation, as well as the oxidative fragmentation of the pentose substrate. Both reactions occur simultaneously and in competition at the same active site. Although the small subunit is not catalytic it is essential for maximal activity. In Acetabularia peniculus (Green alga), this protein is Ribulose bisphosphate carboxylase small subunit, chloroplastic 1.